Here is a 245-residue protein sequence, read N- to C-terminus: 1-(5-phosphoribosyl)-5-[(5-phosphoribosylamino)methylideneamino] imidazole-4-carboxamide isomerase (245 aa).

The active-site Proton acceptor is Asp-7. Asp-129 acts as the Proton donor in catalysis.

The protein belongs to the HisA/HisF family.

The protein localises to the cytoplasm. It carries out the reaction 1-(5-phospho-beta-D-ribosyl)-5-[(5-phospho-beta-D-ribosylamino)methylideneamino]imidazole-4-carboxamide = 5-[(5-phospho-1-deoxy-D-ribulos-1-ylimino)methylamino]-1-(5-phospho-beta-D-ribosyl)imidazole-4-carboxamide. It participates in amino-acid biosynthesis; L-histidine biosynthesis; L-histidine from 5-phospho-alpha-D-ribose 1-diphosphate: step 4/9. The sequence is that of 1-(5-phosphoribosyl)-5-[(5-phosphoribosylamino)methylideneamino] imidazole-4-carboxamide isomerase from Shewanella halifaxensis (strain HAW-EB4).